Reading from the N-terminus, the 731-residue chain is 1,4-alpha-glucan branching enzyme GlgB (731 aa).

An intrachain disulfide couples Cys-193 to Cys-617. The active-site Nucleophile is the Asp-411. Glu-464 serves as the catalytic Proton donor.

The protein belongs to the glycosyl hydrolase 13 family. GlgB subfamily. In terms of assembly, monomer.

The enzyme catalyses Transfers a segment of a (1-&gt;4)-alpha-D-glucan chain to a primary hydroxy group in a similar glucan chain.. It participates in glycan biosynthesis; glycogen biosynthesis. It functions in the pathway capsule biogenesis; capsule polysaccharide biosynthesis. Functionally, essential enzyme that catalyzes the formation of the alpha-1,6-glucosidic linkages in glucan chains by scission of a 1,4-alpha-linked oligosaccharide from growing alpha-1,4-glucan chains and the subsequent attachment of the oligosaccharide to the alpha-1,6 position. Is involved in the biosynthesis of both glycogen and capsular alpha-D-glucan. This chain is 1,4-alpha-glucan branching enzyme GlgB (glgB), found in Mycobacterium tuberculosis (strain CDC 1551 / Oshkosh).